We begin with the raw amino-acid sequence, 326 residues long: UDP-N-acetylglucosamine transporter (326 aa).

Transmembrane regions (helical) follow at residues 8-24 (LSLG…VLTM), 42-58 (AVVV…ILLV), 138-154 (VYQW…VAFV), 174-190 (FVGL…SGFA), 210-226 (IQLG…GVYI), 247-263 (IVVI…AAVI), 269-285 (ILKG…STLI), and 296-312 (TSVF…ATFL).

The protein belongs to the nucleotide-sugar transporter family. SLC35A subfamily. In terms of assembly, interacts with SLC35A2; the interaction is reduced in the presence of SLC35A4. Found in a complex with SLC35A2 and SLC35A4.

Its subcellular location is the golgi apparatus membrane. Functionally, uridine diphosphate-N-acetylglucosamine (UDP-GlcNAc) transporter in the Golgi apparatus. May supply UDP-GlcNAc as substrate for Golgi-resident glycosyltransferases that generate branching of diantennary oligosaccharides. The polypeptide is UDP-N-acetylglucosamine transporter (SLC35A3) (Canis lupus familiaris (Dog)).